A 521-amino-acid chain; its full sequence is Medium/long-chain-fatty-acid--[acyl-carrier-protein] ligase MbtM (521 aa).

Residues 146–172 are disordered; the sequence is RRCPEPPAPHANPAILQGTAGSTGTPK.

The protein belongs to the ATP-dependent AMP-binding enzyme family.

The enzyme catalyses a long-chain fatty acid + holo-[ACP] + ATP = a long-chain fatty acyl-[ACP] + AMP + diphosphate. It carries out the reaction a medium-chain fatty acid + holo-[ACP] + ATP = a medium-chain fatty acyl-[ACP] + AMP + diphosphate. It participates in siderophore biosynthesis; mycobactin biosynthesis. Activates lipidic moieties required for mycobactin biosynthesis. Converts medium- to long-chain aliphatic fatty acids into acyl adenylate, which is further transferred on to the phosphopantetheine arm of the carrier protein MbtL. The polypeptide is Medium/long-chain-fatty-acid--[acyl-carrier-protein] ligase MbtM (mbtM) (Mycolicibacterium paratuberculosis (strain ATCC BAA-968 / K-10) (Mycobacterium paratuberculosis)).